The primary structure comprises 405 residues: Serpin B12 (405 aa).

The segment at 64-83 (SQNESKEPDPCLKSNKQKAG) is disordered.

The protein belongs to the serpin family. Ov-serpin subfamily. As to quaternary structure, interacts with SLFN12; as part of a pathway regulating cell differentiation. May interact with USP14. As to expression, expressed in many tissues, including brain, bone marrow, lymph node, heart, lung, liver, pancreas, testis, ovary, and intestine.

It is found in the cytoplasm. Functionally, inhibits trypsin and plasmin, but not thrombin, coagulation factor Xa, or urokinase-type plasminogen activator. May play a role in cell differentiation. The chain is Serpin B12 (SERPINB12) from Homo sapiens (Human).